Consider the following 3127-residue polypeptide: MKENSYNTSIHSNKVKNYDDADSSGDVAVVGIGLRFPSGNLKESISKPNQLFNELLNGLDGIVSTSERWSDNYCLNGEIVSKFAGLLPLDEWKQFDPIFFAINPSNDNVGSIDPQQRLLLKCVWEALEDSGIDPISLRGTNTSTFIGSSTIDYNNLQKSPFETQNNIFGSTTNSVANRIGYCFDFRGENLTIDTACSSSSNAINCGYNSIKSNKSNVSIVGGVNFILDPHISKSFTQLDMLSPTGKCHTFSSDADGYVRSEGVGIVVLKRLKDAIKDSNNIYCVIKGSSSNIDGNFDKLNFYSPSKSSQCENIKLAIKSTNGQINESDIDYCETHGTGTPTGDPIELEGISRVFNNKASTTKTNNNKQVLVGSVKSNIGHTEACSGVASLIKCCIMFKNKLFLQNINFKEPNPLINFKEWGLKVVTEPIKFNENKSTVMLINNFGITGSNVCLILSEFCSDQFRKSNDYHKMEIDNKFNEKKKYLIPLSSNSSTSLNNYKSSIIKHSNLTPFSSPTSFEGFICNQIKFKSTSLIQKSVIIASDWNEFQDESNHIKLENSDNLISNITVEKKKSPLTVMVLCGQGSQYNKMALSLYDNVPIFRESVNRFDKELFKYYGYSVLDKLRSIDDKDLISIHQPILAQPANVIIQVSLYELYKHWGVSADIIIGHSLGEISSAYCSGMIDFQTLCYLTYHRSVAQNRTIGTGRMLSVNISSDEFINKYQSTTKYKSLEIACYNSPTSIVIAGKEDLLNEITNEFKSNDIFCSMLGLLSSFHTSSQQMIKDEVCSLNISSKQPSIAVFSTVTTNLFNHQTSPFNADYAFNNIRQPVRFTQTITNLYKHIESNDMGNEITFIEVSPHPTLQYYLNQMKSTQSSYFNNGKNITIYSPLNKKKNDYNEFLKTISLLYVNNNFDINFKSQLINNSNNHTNQSNNLPLYQWDDKEYFKLNPSLEKIKNEGPSIHSLGNNTDSPYPSYQTFIDIKKSPFQWLKGHQVSDKFYYPGMGYVHNLLSIYPNQDITISSLEFKSPLVLTEGNRQCLQTTIAPLSKNEFNIKSHYKDQKTNQWILSSLGNFSLFKHNIENNESINIQSLKDKCNFTTISKQDFYETIRIKTNLTYKGLFQGVKECYIGNNCSLVKVSLNEIYNQKEYNHLINNSNMNTFFNTAILDTCLHGVLVAVTQPIVLDRIEAFKFYSSNITSSNISNNDTIKELYVYSETRARTNSQTYSGSIKIILPNGTLLVDIGNVVCTIVGSNPDSTIICKPPSNEIYTPYLQSKDSIINKPEQFKHLYRVDEFSVKEEDNQLLSIELLLSLFYKHINNRCPSINLESLATLEYDQFKQLYYNSLVNENLFKFIFEILKKYQNLPKISNNNNNNNNNNNNNNNNNNNNKNNGYNNYENLYIRTTKVMAKQLFPLKDDDSITDTPQSLFEIGYLNEFYKNSNVIQPSNNLLSEIIVETLKPILNEPIVFRILEAGGGTGSLSLLILEKICKLLNDNSTTSIINIEFTWSDISASFFAEIKEKFSSFTNHNNLNIIYRVLDLEKPLLDQDLKASYYDFVVMSNVMHVVKKLKPTLNEIHNILTPNGQLLYIEPPYKSFYYDSIFGCFSQWWPSSDSDIELRPDRCCMKQEKWINLLNQCNYKDTIMSGNDNLAFLIQTRKPTINEIISEESKSLDQLNSFSNIILFSNNNNIRNNNNRNKNDSRSSIQNLISLNQELRHKIVNINNYNEFQSWITNNQNKDDCNKTLIIFLKSIESTMNTFNFKEITFEYIQINQLILKLELSNNFKHLLLSLNSSTDNYLSSSIIGSARYFHVEFPQLDLLTLNYDNVSIENNQQLSLINYLINSDNNIQIEFTINNNKVYYERYFKRSNNIKSKLQSESFETNKDNLYIQLNSNLEYQLYSKKDELNSNEVEIEIKATGINYKDYLMYIGMIGSDLDIKYGKEYEIENGIGIDNPNIGNDFSGIITRLGNNVKKFKVGDQVCGIGPKASSSHVIVDFNFIYYKPFNCNHSVSASIPSIYITSLHSIYSIGNLKSNESILIHSAAGGIGISSLDLLKSKQHQGYIFLTVGSKDKEEYLTKKYGSLITAIYSSRNKNYVKDIKNKLIELGEVEQQGVDLILNTLSSEYMDSNFQCLNLSGRIIDLSITHLTPNDYMTNNHFKFNMTYSNVEVVDFTSKLIKSYLKKIIKMINSNKLELSVPIIEYSNNQFKDAIEYINQRKHIGKIIVNHNQDEFNRVYNNYQSNNNHIIMKHSYDISKLNIGKNILLTGQTGIVLEILKYLIKYSNHSIENIIILSKSKLKWELELLINQSKFKKDNIIKFHFNQIDIEDSNKVNQVLNQLELNENITNIDSIIHFAFMNDISDIQQVDMNRLNNTHGAKTIGAINLHNQSINRSWNIKQFIMASSVVSIVGSDRQCCYVSACNVIDSLSKYRHSIGLPSLAINLGAISSTGFISRNNAIETMFKSSILNLFSPQLIISSLDLFIQNQHQYPNYCISDFNFEILPSTLTNQYLSKFDFEINIVKKSNQMKSFTGGNGDSNNEIIRSTILNKISELLSIDESKINEDLQLTQYGMDSLVIVQLKNFIDNQIGHNIITIQQLQNNKINQSIEIIKSAHNKNNNNNNINNNNNNNNNNNNNNNNNNNNNNNNNNNNNNNNNNLVKKEQQSLDEFIKNETKLNESIISRPYSIKNILNNNNNSKSIFLTGSTGFLGAYLLTELIKMNNVSKIYCLIRNNSKLTNPIDVIINNLKKHQLIDMNEESPKRKTKINDHTGNISNDKLYGNLNSDNSSNNQIKEDQLIKIIPMIGDISKDKFGLTEQDYLKLSNECDIIINSAADLNLKSSYEESKIVNINNVNQIIKLSISNNSSQKLIVHFSSLAVFINHPFEDGEDFEETNIVPSFNSTPVGYIQCKVISERLLTNAAESRGIPSIIIRPPVLTLYNIPITIFIAILIIDIFSNPITGIGHSNDFISLLIKSSKEIGYYPNIHKSVFTTPVTTIAKTTIDLIFNENSWNQNKSKPISIYNFNGDSIEMKSFYRVLENSFKCKEIDFYEWIELVSKSNGKSSKRYSTFHIHKNQNLLITSSKINSLFKMSNSTKELLISIGSYNHQDWEINESIILNDIINNH.

Residues 24–457 (SGDVAVVGIG…GSNVCLILSE (434 aa)) enclose the Ketosynthase family 3 (KS3) domain. Residues Cys-196, His-335, and His-380 each act as for beta-ketoacyl synthase activity in the active site. The segment at 660 to 693 (GVSADIIIGHSLGEISSAYCSGMIDFQTLCYLTY) is acyl/malonyl transferase. Ser-670 serves as the catalytic For acyl/malonyl transferase activity. Positions 958–1080 (GPSIHSLGNN…GNFSLFKHNI (123 aa)) are N-terminal hotdog fold. The PKS/mFAS DH domain maps to 958 to 1257 (GPSIHSLGNN…CTIVGSNPDS (300 aa)). Catalysis depends on His-992, which acts as the Proton acceptor; for dehydratase activity. The interval 1096-1257 (NFTTISKQDF…CTIVGSNPDS (162 aa)) is C-terminal hotdog fold. Catalysis depends on Asp-1168, which acts as the Proton donor; for dehydratase activity. The segment at 1369 to 1394 (SNNNNNNNNNNNNNNNNNNNNKNNGY) is disordered. Residues 1370 to 1394 (NNNNNNNNNNNNNNNNNNNNKNNGY) show a composition bias toward low complexity. The Carrier domain maps to 2539 to 2616 (SNNEIIRSTI…QSIEIIKSAH (78 aa)). O-(pantetheine 4'-phosphoryl)serine is present on Ser-2576. The disordered stretch occupies residues 2617 to 2659 (NKNNNNNNINNNNNNNNNNNNNNNNNNNNNNNNNNNNNNNNNN). The stretch at 2617 to 2671 (NKNNNNNNINNNNNNNNNNNNNNNNNNNNNNNNNNNNNNNNNNLVKKEQQSLDEF) forms a coiled coil. A helical membrane pass occupies residues 2937–2957 (VLTLYNIPITIFIAILIIDIF).

The cofactor is pantetheine 4'-phosphate.

The protein localises to the membrane. Probable polyketide synthase. This Dictyostelium discoideum (Social amoeba) protein is Probable polyketide synthase 33 (pks33).